The sequence spans 428 residues: Proteinase-activated receptor 1 (428 aa).

The first 21 residues, 1–21 (MGPQRLLLVAAGLSLCGPLLS), serve as a signal peptide directing secretion. Positions 22–41 (SRVPVRQPESEMTDATVNPR) are cleaved as a propeptide — removed for receptor activation. Residues 42–105 (SFFLRNPGEN…SGYLTSPWLR (64 aa)) are Extracellular-facing. 2 N-linked (GlcNAc...) asparagine glycosylation sites follow: asparagine 65 and asparagine 78. A helical transmembrane segment spans residues 106-131 (LFIPSVYTFVFVVSLPLNILAIAVFV). Residues 132-140 (LKMKVKKPA) lie on the Cytoplasmic side of the membrane. A helical membrane pass occupies residues 141 to 160 (VVYMLHLAMADVLFVSVLPL). Residues 161 to 179 (KISYYFSGSDWQFGSGMCR) lie on the Extracellular side of the membrane. Cysteine 178 and cysteine 257 form a disulfide bridge. Residues 180–201 (FATAAFYCNMYASIMLMTVISI) form a helical membrane-spanning segment. The Cytoplasmic segment spans residues 202-221 (DRFLAVVYPIQSLSWRTLGR). A helical membrane pass occupies residues 222–242 (ANFTCLVIWVMAIMGVVPLLL). Residues 243-271 (KEQTTRVPGLNITTCHDVLNETLLQGFYS) are Extracellular-facing. 2 N-linked (GlcNAc...) asparagine glycosylation sites follow: asparagine 253 and asparagine 262. The helical transmembrane segment at 272 to 291 (YYFSAFSAVFFLVPLIISTI) threads the bilayer. Topologically, residues 292–314 (CYMSIIRCLSSSSVANRSKKSRA) are cytoplasmic. A helical transmembrane segment spans residues 315–337 (LFLSAAVFCVFIVCFGPTNVLLI). The Extracellular portion of the chain corresponds to 338 to 352 (MHYLLLSDSPATEKA). The chain crosses the membrane as a helical span at residues 353–377 (YFAYLLCVCVSSVSCCIDPLIYYYA). At 378–428 (SSECQRHLYGILCCKESSDPNSYNSTGQLMPSKMDTCSSHLNNSIYKKLLA) the chain is on the cytoplasmic side. At serine 421 the chain carries Phosphoserine.

Belongs to the G-protein coupled receptor 1 family. Proteolytic cleavage by thrombin generates a new N-terminus that functions as a tethered ligand. Also proteolytically cleaved by cathepsin CTSG. In terms of processing, phosphorylated in the C-terminal tail; probably mediating desensitization prior to the uncoupling and internalization of the receptor.

It localises to the cell membrane. High affinity receptor that binds the activated thrombin, leading to calcium release from intracellular stores. The thrombin-activated receptor signaling pathway is mediated through PTX-insensitive G proteins, activation of phospholipase C resulting in the production of 1D-myo-inositol 1,4,5-trisphosphate (InsP3) which binds to InsP3 receptors causing calcium release from the stores. In astrocytes, the calcium released into the cytosol allows the Ca(2+)-dependent release of L-glutamate into the synaptic cleft through BEST1, that targets the neuronal postsynaptic GRIN2A/NMDAR receptor resulting in the synaptic plasticity regulation. May play a role in platelets activation and in vascular development. Mediates up-regulation of pro-inflammatory cytokines, such as MCP-1/CCL2 and IL6, triggered by coagulation factor Xa (F10) in cardiac fibroblasts and umbilical vein endothelial cells. The protein is Proteinase-activated receptor 1 of Cricetulus longicaudatus (Long-tailed dwarf hamster).